A 1685-amino-acid polypeptide reads, in one-letter code: Phosphatidylinositol 4-phosphate 3-kinase C2 domain-containing subunit alpha (1685 aa).

2 disordered regions span residues 1-33 and 41-60; these read MAQI…EALQ and KLQK…LSSS. A2 is modified (N-acetylalanine). The segment at 2–142 is interaction with clathrin; sufficient to induce clathrin assembly; the sequence is AQISSNSGFK…FRPTIQRGQW (141 aa). Over residues 19-31 the composition is skewed to basic and acidic residues; the sequence is EPTRAKDVDKEEA. Residues 49 to 60 are compositionally biased toward polar residues; that stretch reads TDNQRGFELSSS. A phosphoserine mark is found at S60, S108, S259, S327, and S338. The 89-residue stretch at 419-507 folds into the PI3K-RBD domain; sequence NASVKVSIDI…DTEIRLQLLT (89 aa). Residue S628 is modified to Phosphoserine. Residues 680-839 form the C2 PI3K-type domain; it reads TTEQLQFTIF…ERIVLQVDFP (160 aa). A PIK helical domain is found at 859–1035; that stretch reads QHNLETLEND…EHVLGALLSV (177 aa). One can recognise a PI3K/PI4K catalytic domain in the interval 1103-1381; that stretch reads SIKSCSFFSS…LIESSLGSIA (279 aa). The tract at residues 1109–1115 is G-loop; the sequence is FFSSNAV. Positions 1245-1253 are catalytic loop; sequence GICDRHNDN. The activation loop stretch occupies residues 1264–1290; it reads HIDFGKFLGHAQMFGTFKRDRAPFVLT. A PX domain is found at 1420 to 1536; sequence GRIKEVSVFT…TFFHPLLRDE (117 aa). The segment at 1486–1491 is interaction with PtdIns(4,5)P2-containing membranes; the sequence is RMVLGR. Phosphoserine is present on S1551. One can recognise a C2 domain in the interval 1554-1677; that stretch reads TPGQIGGAVK…NLSKETVKWY (124 aa). The short motif at 1607–1618 is the Nuclear localization signal element; the sequence is SKRKTKISRKTR.

The protein belongs to the PI3/PI4-kinase family. As to quaternary structure, part of a complex with ERBB2 and EGFR. Interacts with clathrin trimers. Interacts with SBF2/MTMR13. The cofactor is Ca(2+). Mg(2+) serves as cofactor. Phosphorylated on Ser-259 during mitosis and upon UV irradiation; which does not change enzymatic activity but leads to proteasomal degradation. Phosphorylated upon insulin stimulation; which may lead to enzyme activation.

It localises to the cell membrane. Its subcellular location is the cytoplasmic vesicle. The protein resides in the clathrin-coated vesicle. It is found in the nucleus. The protein localises to the cytoplasm. It localises to the golgi apparatus. Its subcellular location is the trans-Golgi network. The enzyme catalyses a 1,2-diacyl-sn-glycero-3-phospho-(1D-myo-inositol 4-phosphate) + ATP = a 1,2-diacyl-sn-glycero-3-phospho-(1D-myo-inositol-3,4-bisphosphate) + ADP + H(+). It catalyses the reaction a 1,2-diacyl-sn-glycero-3-phospho-(1D-myo-inositol) + ATP = a 1,2-diacyl-sn-glycero-3-phospho-(1D-myo-inositol-3-phosphate) + ADP + H(+). It carries out the reaction a 1,2-diacyl-sn-glycero-3-phospho-(1D-myo-inositol-4,5-bisphosphate) + ATP = a 1,2-diacyl-sn-glycero-3-phospho-(1D-myo-inositol-3,4,5-trisphosphate) + ADP + H(+). With respect to regulation, only slightly inhibited by wortmannin and LY294002. Activated by clathrin and insulin. Functionally, generates phosphatidylinositol 3-phosphate (PtdIns3P) and phosphatidylinositol 3,4-bisphosphate (PtdIns(3,4)P2) that act as second messengers. Has a role in several intracellular trafficking events. Functions in insulin signaling and secretion. Required for translocation of the glucose transporter SLC2A4/GLUT4 to the plasma membrane and glucose uptake in response to insulin-mediated RHOQ activation. Regulates insulin secretion through two different mechanisms: involved in glucose-induced insulin secretion downstream of insulin receptor in a pathway that involves AKT1 activation and TBC1D4/AS160 phosphorylation, and participates in the late step of insulin granule exocytosis probably in insulin granule fusion. Synthesizes PtdIns3P in response to insulin signaling. Functions in clathrin-coated endocytic vesicle formation and distribution. Regulates dynamin-independent endocytosis, probably by recruiting EEA1 to internalizing vesicles. In neurosecretory cells synthesizes PtdIns3P on large dense core vesicles. Participates in calcium induced contraction of vascular smooth muscle by regulating myosin light chain (MLC) phosphorylation through a mechanism involving Rho kinase-dependent phosphorylation of the MLCP-regulatory subunit MYPT1. May play a role in the EGF signaling cascade. May be involved in mitosis and UV-induced damage response. Required for maintenance of normal renal structure and function by supporting normal podocyte function. Involved in the regulation of ciliogenesis and trafficking of ciliary components. This is Phosphatidylinositol 4-phosphate 3-kinase C2 domain-containing subunit alpha (PIK3C2A) from Pongo abelii (Sumatran orangutan).